The following is an 821-amino-acid chain: DNA replication licensing factor MCM6 (821 aa).

N-acetylmethionine is present on Met1. Ser13, Ser219, and Ser271 each carry phosphoserine. The residue at position 278 (Thr278) is a Phosphothreonine. The MCM domain maps to 346-553 (LYHNLCTSLF…TDYAIARRIV (208 aa)). His359, Ser399, Thr400, Ala401, Lys402, Ser403, and Asn504 together coordinate ATP. An Arginine finger motif is present at residues 528–531 (SRFD). Arg619 and Glu622 together coordinate ADP. Lys643 bears the N6-acetyllysine mark. The segment at 676–708 (TDEGQGGVNGHADSPAPVNRFNGSSEDASQETV) is disordered. Residues Ser689, Ser704, and Ser762 each carry the phosphoserine modification. A compositionally biased stretch (polar residues) spans 696-708 (FNGSSEDASQETV). Residue Thr791 is modified to Phosphothreonine.

This sequence belongs to the MCM family. In terms of assembly, component of the MCM2-7 complex. The complex forms a toroidal hexameric ring with the proposed subunit order MCM2-MCM6-MCM4-MCM7-MCM3-MCM5. Component of the CMG helicase complex, a hexameric ring of related MCM2-7 subunits stabilized by CDC45 and the tetrameric GINS complex. May interact with MCM10. Interacts with TIPIN. Interacts with CDT1. Interacts with MCMBP. Interacts with DDI2. Post-translationally, O-glycosylated (O-GlcNAcylated), in a cell cycle-dependent manner.

Its subcellular location is the nucleus. It localises to the chromosome. The enzyme catalyses ATP + H2O = ADP + phosphate + H(+). Functionally, acts as a component of the MCM2-7 complex (MCM complex) which is the replicative helicase essential for 'once per cell cycle' DNA replication initiation and elongation in eukaryotic cells. Core component of CDC45-MCM-GINS (CMG) helicase, the molecular machine that unwinds template DNA during replication, and around which the replisome is built. The active ATPase sites in the MCM2-7 ring are formed through the interaction surfaces of two neighboring subunits such that a critical structure of a conserved arginine finger motif is provided in trans relative to the ATP-binding site of the Walker A box of the adjacent subunit. The six ATPase active sites, however, are likely to contribute differentially to the complex helicase activity. The polypeptide is DNA replication licensing factor MCM6 (Mcm6) (Mus musculus (Mouse)).